The sequence spans 113 residues: UPF0122 protein PEPE_0845 (113 aa).

It belongs to the UPF0122 family.

In terms of biological role, might take part in the signal recognition particle (SRP) pathway. This is inferred from the conservation of its genetic proximity to ftsY/ffh. May be a regulatory protein. This chain is UPF0122 protein PEPE_0845, found in Pediococcus pentosaceus (strain ATCC 25745 / CCUG 21536 / LMG 10740 / 183-1w).